We begin with the raw amino-acid sequence, 545 residues long: Probable bifunctional tRNA threonylcarbamoyladenosine biosynthesis protein (545 aa).

The tract at residues 1 to 329 (MKNTFILGIE…YRTDDVKVTW (329 aa)) is kae1. Fe cation contacts are provided by His-113, His-117, and Tyr-134. L-threonylcarbamoyladenylate is bound by residues 134-138 (YVSGA), Asp-166, Gly-179, Glu-183, and Asn-262. Residue Asp-290 participates in Fe cation binding. A Protein kinase domain is found at 340–545 (EISPGTSLKL…EEIKKRARYA (206 aa)). Residues 353–361 (LDNGAEAIV) and Lys-375 contribute to the ATP site. Asp-462 serves as the catalytic Proton acceptor; for kinase activity.

In the N-terminal section; belongs to the KAE1 / TsaD family. It in the C-terminal section; belongs to the protein kinase superfamily. Tyr protein kinase family. BUD32 subfamily. As to quaternary structure, component of the KEOPS complex that consists of Kae1, Bud32, Cgi121 and Pcc1; the whole complex dimerizes. Fe(2+) serves as cofactor.

Its subcellular location is the cytoplasm. It catalyses the reaction L-seryl-[protein] + ATP = O-phospho-L-seryl-[protein] + ADP + H(+). It carries out the reaction L-threonyl-[protein] + ATP = O-phospho-L-threonyl-[protein] + ADP + H(+). The enzyme catalyses L-threonylcarbamoyladenylate + adenosine(37) in tRNA = N(6)-L-threonylcarbamoyladenosine(37) in tRNA + AMP + H(+). Required for the formation of a threonylcarbamoyl group on adenosine at position 37 (t(6)A37) in tRNAs that read codons beginning with adenine. Is a component of the KEOPS complex that is probably involved in the transfer of the threonylcarbamoyl moiety of threonylcarbamoyl-AMP (TC-AMP) to the N6 group of A37. The Kae1 domain likely plays a direct catalytic role in this reaction. The Bud32 domain probably displays kinase activity that regulates Kae1 function. In Methanosarcina barkeri (strain Fusaro / DSM 804), this protein is Probable bifunctional tRNA threonylcarbamoyladenosine biosynthesis protein.